Here is a 408-residue protein sequence, read N- to C-terminus: ATP phosphoribosyltransferase regulatory subunit (408 aa).

Belongs to the class-II aminoacyl-tRNA synthetase family. HisZ subfamily. Heteromultimer composed of HisG and HisZ subunits.

It localises to the cytoplasm. It functions in the pathway amino-acid biosynthesis; L-histidine biosynthesis; L-histidine from 5-phospho-alpha-D-ribose 1-diphosphate: step 1/9. Its function is as follows. Required for the first step of histidine biosynthesis. May allow the feedback regulation of ATP phosphoribosyltransferase activity by histidine. This Gloeothece citriformis (strain PCC 7424) (Cyanothece sp. (strain PCC 7424)) protein is ATP phosphoribosyltransferase regulatory subunit.